We begin with the raw amino-acid sequence, 324 residues long: Glutathione synthetase (324 aa).

Residues 125–312 (EKLFTTTHFP…ISTIILDNLE (188 aa)) form the ATP-grasp domain. 152–209 (FIKTYKDIIIKPLHGMAGLSIFRIKEHDPNTSVIIETMTKYETIPCISQNYITDIQKG) is a binding site for ATP. Mg(2+) contacts are provided by E283 and N285.

It belongs to the prokaryotic GSH synthase family. Requires Mg(2+) as cofactor. It depends on Mn(2+) as a cofactor.

The catalysed reaction is gamma-L-glutamyl-L-cysteine + glycine + ATP = glutathione + ADP + phosphate + H(+). Its pathway is sulfur metabolism; glutathione biosynthesis; glutathione from L-cysteine and L-glutamate: step 2/2. The sequence is that of Glutathione synthetase from Buchnera aphidicola subsp. Baizongia pistaciae (strain Bp).